Reading from the N-terminus, the 368-residue chain is Probable deoxyhypusine synthase (368 aa).

NAD(+)-binding positions include 100–104 (SNLVS), 126–128 (TAG), Glu132, and Asp233. 131 to 132 (EE) is a binding site for spermidine. Position 238 (Asp238) interacts with spermidine. Gly278 contacts NAD(+). His283 serves as a coordination point for spermidine. 303 to 304 (TA) serves as a coordination point for NAD(+). Spermidine contacts are provided by residues 309–311 (GSD) and 318–324 (EAISWGK). Lys324 functions as the Nucleophile in the catalytic mechanism. NAD(+) is bound at residue 337–338 (EA).

This sequence belongs to the deoxyhypusine synthase family. It depends on NAD(+) as a cofactor.

The enzyme catalyses [eIF5A protein]-L-lysine + spermidine = [eIF5A protein]-deoxyhypusine + propane-1,3-diamine. Its pathway is protein modification; eIF5A hypusination. Its function is as follows. Catalyzes the NAD-dependent oxidative cleavage of spermidine and the subsequent transfer of the butylamine moiety of spermidine to the epsilon-amino group of a specific lysine residue of the eIF-5A precursor protein to form the intermediate deoxyhypusine residue. The chain is Probable deoxyhypusine synthase from Drosophila melanogaster (Fruit fly).